Consider the following 186-residue polypeptide: EFFKTFNALIDQNKQLVISADRSPSDLDGVEERIKSRLGWGLVADINETTFELRLGILQAKVEQMNMYVPKDVLEFLARNIKSNIRELEGALNKVTHTSLIGRSMTVESASETLIDLLRSNHRSVTIEEIQKKVAEFFNIKVADMQSNRRLRSLARPRQIAMYFAKKFTQKSLPDIGRNFGGRDHT.

Position 1 (glutamate 1) is a region of interest, domain I, interacts with DnaA modulators. Glutamate 1 is a region of interest (domain II). Residues glutamate 1 to serine 99 are domain III, AAA+ region. A domain IV, binds dsDNA region spans residues leucine 100 to threonine 186.

The protein belongs to the DnaA family. As to quaternary structure, oligomerizes as a right-handed, spiral filament on DNA at oriC.

It localises to the cytoplasm. Plays an essential role in the initiation and regulation of chromosomal replication. ATP-DnaA binds to the origin of replication (oriC) to initiate formation of the DNA replication initiation complex once per cell cycle. Binds the DnaA box (a 9 base pair repeat at the origin) and separates the double-stranded (ds)DNA. Forms a right-handed helical filament on oriC DNA; dsDNA binds to the exterior of the filament while single-stranded (ss)DNA is stabiized in the filament's interior. The ATP-DnaA-oriC complex binds and stabilizes one strand of the AT-rich DNA unwinding element (DUE), permitting loading of DNA polymerase. After initiation quickly degrades to an ADP-DnaA complex that is not apt for DNA replication. Binds acidic phospholipids. In Wolbachia sp, this protein is Chromosomal replication initiator protein DnaA.